The chain runs to 185 residues: Elongation factor P (185 aa).

Belongs to the elongation factor P family.

The protein resides in the cytoplasm. It participates in protein biosynthesis; polypeptide chain elongation. In terms of biological role, involved in peptide bond synthesis. Stimulates efficient translation and peptide-bond synthesis on native or reconstituted 70S ribosomes in vitro. Probably functions indirectly by altering the affinity of the ribosome for aminoacyl-tRNA, thus increasing their reactivity as acceptors for peptidyl transferase. The polypeptide is Elongation factor P (Kosmotoga olearia (strain ATCC BAA-1733 / DSM 21960 / TBF 19.5.1)).